We begin with the raw amino-acid sequence, 427 residues long: Enolase (427 aa).

Gln-163 contributes to the (2R)-2-phosphoglycerate binding site. Residue Glu-205 is the Proton donor of the active site. Mg(2+) is bound by residues Asp-242, Glu-287, and Asp-314. (2R)-2-phosphoglycerate-binding residues include Lys-339, Arg-368, Ser-369, and Lys-390. Lys-339 (proton acceptor) is an active-site residue.

It belongs to the enolase family. Requires Mg(2+) as cofactor.

It localises to the cytoplasm. The protein localises to the secreted. The protein resides in the cell surface. The catalysed reaction is (2R)-2-phosphoglycerate = phosphoenolpyruvate + H2O. Its pathway is carbohydrate degradation; glycolysis; pyruvate from D-glyceraldehyde 3-phosphate: step 4/5. Functionally, catalyzes the reversible conversion of 2-phosphoglycerate (2-PG) into phosphoenolpyruvate (PEP). It is essential for the degradation of carbohydrates via glycolysis. The chain is Enolase from Solibacter usitatus (strain Ellin6076).